The chain runs to 225 residues: UPF0758 protein Shewmr7_0359 (225 aa).

In terms of domain architecture, MPN spans 102 to 224; it reads VLTNPDLTRD…IVSFAERGWI (123 aa). Zn(2+) is bound by residues His173, His175, and Asp186. The short motif at 173-186 is the JAMM motif element; that stretch reads HNHPSGIAEPSQAD.

The protein belongs to the UPF0758 family.

The protein is UPF0758 protein Shewmr7_0359 of Shewanella sp. (strain MR-7).